Reading from the N-terminus, the 271-residue chain is Acyl-[acyl-carrier-protein]--UDP-N-acetylglucosamine O-acyltransferase (271 aa).

The protein belongs to the transferase hexapeptide repeat family. LpxA subfamily. As to quaternary structure, homotrimer.

It localises to the cytoplasm. It catalyses the reaction a (3R)-hydroxyacyl-[ACP] + UDP-N-acetyl-alpha-D-glucosamine = a UDP-3-O-[(3R)-3-hydroxyacyl]-N-acetyl-alpha-D-glucosamine + holo-[ACP]. The protein operates within glycolipid biosynthesis; lipid IV(A) biosynthesis; lipid IV(A) from (3R)-3-hydroxytetradecanoyl-[acyl-carrier-protein] and UDP-N-acetyl-alpha-D-glucosamine: step 1/6. Its function is as follows. Involved in the biosynthesis of lipid A, a phosphorylated glycolipid that anchors the lipopolysaccharide to the outer membrane of the cell. This Azorhizobium caulinodans (strain ATCC 43989 / DSM 5975 / JCM 20966 / LMG 6465 / NBRC 14845 / NCIMB 13405 / ORS 571) protein is Acyl-[acyl-carrier-protein]--UDP-N-acetylglucosamine O-acyltransferase.